Consider the following 577-residue polypeptide: Cryptochrome DASH, chloroplastic/mitochondrial (577 aa).

A chloroplast and mitochondrion-targeting transit peptide spans 1-53 (MIKQPFLLTKFTPFSSKSKHTLFTFHCNFSIKMASLTARTTPTVQNVPGLTPE). The Photolyase/cryptochrome alpha/beta domain occupies 78 to 219 (GVAIVWFRND…GNDPGSGNTT (142 aa)). Positions 550 to 577 (TKKTGDSKTAFSSRRGRPEDNRRKRHGY) are disordered.

This sequence belongs to the DNA photolyase class-1 family. The cofactor is FAD. (6R)-5,10-methylene-5,6,7,8-tetrahydrofolate is required as a cofactor. Expressed in the endosperm and embryo 96 hours after seed imbibition. In the embryo, detected in the root meristem, the root cap, the shoot apical meristem and the epidermis of cotyledons. In adult plants, detcted in roots, the whole leaf lamina, the stem and in glandular trichomes.

It is found in the plastid. Its subcellular location is the chloroplast. It localises to the mitochondrion. Its function is as follows. May have a photoreceptor function and might bind ss- and ds-DNA in a sequence non-specific manner. Lacks photolyase activity. Has a potential role in detecting the dawn and dusk transitions and, consequently, in circadian input pathways. This Solanum lycopersicum (Tomato) protein is Cryptochrome DASH, chloroplastic/mitochondrial.